Consider the following 832-residue polypeptide: DEAD-box ATP-dependent RNA helicase 13 (832 aa).

The span at 1-12 (MAAAPPPPPPPQ) shows a compositional bias: pro residues. 2 disordered regions span residues 1-59 (MAAA…TMVE) and 91-173 (VEDL…DDNV). Residues 29 to 42 (RKGKKSRGAKKPRR) show a composition bias toward basic residues. The span at 43-55 (AAAAAAASTSSAG) shows a compositional bias: low complexity. Residues 105 to 114 (QKKKKRKKRK) are compositionally biased toward basic residues. Residues 128-137 (LVVECEEEGE) show a composition bias toward acidic residues. The segment covering 141–155 (KRVKKKRRSRKKRKV) has biased composition (basic residues). Residues 156–167 (KEMEEKMESKED) show a composition bias toward basic and acidic residues. The short motif at 198-226 (YAWRELRLHPLLITAVRRLGFKEPTPIQK) is the Q motif element. In terms of domain architecture, Helicase ATP-binding spans 230-447 (PAAAHQGKDV…KLKRGLVTAK (218 aa)). 243–250 (AETGSGKT) contributes to the ATP binding site. The DEAD box motif lies at 371 to 374 (DEAD). The Helicase C-terminal domain maps to 484 to 645 (KLEESFIECS…QFPVDHAYMP (162 aa)). Residues 800 to 832 (RRLAENWRRKKQKEKKSTREQKRKEKRIAKERD) form a disordered region. The segment covering 814 to 832 (KKSTREQKRKEKRIAKERD) has biased composition (basic and acidic residues).

The protein belongs to the DEAD box helicase family. DDX24/MAK5 subfamily.

The catalysed reaction is ATP + H2O = ADP + phosphate + H(+). In Oryza sativa subsp. japonica (Rice), this protein is DEAD-box ATP-dependent RNA helicase 13.